The sequence spans 1394 residues: Leucine-rich PPR motif-containing protein, mitochondrial (1394 aa).

The transit peptide at 1–59 (MAALLRSARWLLRAGAAPRLPLSLRLLPGGPGRLHAASYLPAARAGPVAGGLLSPARLY) directs the protein to the mitochondrion. PPR repeat units lie at residues 126–160 (LLRSCGSLLPELKLEERTEFAHRIWDTLQKLGAVY), 161–195 (DVSHYNALLKVYLQNEYKFSPTDFLAKMEEANIQP), 196–230 (NRVTYQRLIASYCNVGDIEGASKILGFMKTKDLPV), 231–265 (TEAVFSALVTGHARAGDMENAENILTVMRDAGIEP), 266–300 (GPDTYLALLNAYAEKGDIDHVKQTLEKVEKSELHL), 301–335 (MDRDLLQIIFSFSKAGYPQYVSEILEKVTCERRYI), 403–437 (HSFPLQFTLHCALLANKTDLAKALMKAVKEEGFPI), and 438–472 (RPHYFWPLLVGRRKEKNVQGIIEILKGMQELGVHP). 3 positions are modified to N6-acetyllysine: lysine 155, lysine 187, and lysine 226. N6-acetyllysine is present on lysine 292. An N6-acetyllysine mark is found at lysine 463 and lysine 613. PPR repeat units lie at residues 678–709 (IRDVLKQLILVLCSEENMQKALELKAKYESDM), 710–746 (VTGGYAALINLCCRHDKVEDALNLKEEFDRLDSSAVL), 747–784 (DTGKYVGLVRVLAKHGKLQDAINILKEMKEKDVLIKDT), 785–820 (TALSFFHMLNGAALRGEIETVKQLHEAIVTLGLAEP), 821–856 (STNISFPLVTVHLEKGDLSTALEVAIDCYEKYKVLP), and 954–988 (RDQMYYNLLKLYKINGDWQRADAVWNKIQEENVIP). An interaction with BECN1 and Aedes aegypti venom allergen-1 region spans residues 712–1067 (GGYAALINLC…AKEQNIVFNA (356 aa)). An N6-acetyllysine mark is found at lysine 726 and lysine 750. Residues serine 1026, serine 1027, and serine 1029 each carry the phosphoserine modification. PPR repeat units follow at residues 1031–1065 (TEPDFQKDILIACRLNQKKGAYDIFLNAKEQNIVF), 1066–1102 (NAETYSNLIKLLMSEDYFTQAMEVKAFAETHIKGFTL), 1103–1137 (NDAANSRLIITQVRRDYLKEAVTTLKTVLDQQQTP), 1138–1175 (SRLAVTRVIQALAMKGDVENIEVVQKMLNGLEDSIGLS), 1176–1210 (KMVFINNIALAQIKNNNIDAAIENIENMLTSENKV), and 1317–1351 (KEEAYNSLMKSYVSEKDVTSAKALYEHLTAKNTKL). An RNA-binding region spans residues 1121–1394 (KEAVTTLKTV…QLRKLRENSS (274 aa)). Threonine 1136 is subject to Phosphothreonine. Serine 1138 carries the phosphoserine modification.

As to quaternary structure, component of mRNP complexes associated with HNRPA1. Component of the complex, at least composed of LRPPRC, BECN1 and BCL2; the interactions prevent BECN1 from forming an autophagy-inducing complex with PIK3C3. Interacts with CECR2, HEBP2, MAP1S and UXT. Interacts with PPARGC1A. Interacts with FOXO1. Interacts (via N-terminus) with EIF4E; the interaction promotes association of EIF4E with 4ESE-containing mRNAs. Interacts with exportin XPO1/CRM1; interacts both alone and in complex with EIF4E and 4ESE-containing mRNAs to form an EIF4E-dependent mRNA export complex. Interacts with importin IPO8; the interaction occurs when LRPPRC is in its RNA-free form and returns LRPPRC to the nucleus for further export rounds. Interacts with BECN1. Interacts with Aedes aegypti venom allergen-1; the interaction interrupts BECN1 and LRPPRC association. Expressed ubiquitously. Expression is highest in heart, skeletal muscle, kidney and liver, intermediate in brain, non-mucosal colon, spleen and placenta, and lowest in small intestine, thymus, lung and peripheral blood leukocytes.

The protein localises to the mitochondrion. It is found in the nucleus. It localises to the nucleoplasm. Its subcellular location is the nucleus inner membrane. The protein resides in the nucleus outer membrane. May play a role in RNA metabolism in both nuclei and mitochondria. In the nucleus binds to HNRPA1-associated poly(A) mRNAs and is part of nmRNP complexes at late stages of mRNA maturation which are possibly associated with nuclear mRNA export. Positively modulates nuclear export of mRNAs containing the EIF4E sensitivity element (4ESE) by binding simultaneously to both EIF4E and the 4ESE and acting as a platform for assembly for the RNA export complex. Also binds to exportin XPO1/CRM1 to engage the nuclear pore and traffic the bound mRNAs to the cytoplasm. May bind mature mRNA in the nucleus outer membrane. In mitochondria binds to poly(A) mRNA. Plays a role in translation or stability of mitochondrially encoded cytochrome c oxidase (COX) subunits. May be involved in transcription regulation. Cooperates with PPARGC1A to regulate certain mitochondrially encoded genes and gluconeogenic genes and may regulate docking of PPARGC1A to transcription factors. Seems to be involved in the transcription regulation of the multidrug-related genes MDR1 and MVP. Part of a nuclear factor that binds to the invMED1 element of MDR1 and MVP gene promoters. Binds single-stranded DNA. Required for maintaining mitochondrial potential. Suppresses the initiation of basal levels of autophagy and mitophagy by sustaining BCL2 levels. In Homo sapiens (Human), this protein is Leucine-rich PPR motif-containing protein, mitochondrial (LRPPRC).